Here is a 133-residue protein sequence, read N- to C-terminus: Small ribosomal subunit protein uS19 (133 aa).

The protein belongs to the universal ribosomal protein uS19 family.

Functionally, protein S19 forms a complex with S13 that binds strongly to the 16S ribosomal RNA. This is Small ribosomal subunit protein uS19 from Thermococcus onnurineus (strain NA1).